The chain runs to 293 residues: UPF0282 protein MK0213 (293 aa).

Belongs to the UPF0282 family.

The polypeptide is UPF0282 protein MK0213 (Methanopyrus kandleri (strain AV19 / DSM 6324 / JCM 9639 / NBRC 100938)).